The sequence spans 356 residues: Histidine biosynthesis bifunctional protein HisB (356 aa).

The histidinol-phosphatase stretch occupies residues 1–166 (MSKKVLFIDR…AICNYLTSLN (166 aa)). The active-site Nucleophile is Asp9. Mg(2+) contacts are provided by Asp9 and Asp11. Asp11 functions as the Proton donor in the catalytic mechanism. Zn(2+) is bound by residues Cys93, His95, Cys101, and Cys103. Residue Asp130 coordinates Mg(2+). The interval 167-356 (RYAHVKRITK…VLPSSKGVLS (190 aa)) is imidazoleglycerol-phosphate dehydratase.

This sequence in the N-terminal section; belongs to the histidinol-phosphatase family. In the C-terminal section; belongs to the imidazoleglycerol-phosphate dehydratase family. The cofactor is Mg(2+). Zn(2+) serves as cofactor.

It localises to the cytoplasm. It catalyses the reaction D-erythro-1-(imidazol-4-yl)glycerol 3-phosphate = 3-(imidazol-4-yl)-2-oxopropyl phosphate + H2O. It carries out the reaction L-histidinol phosphate + H2O = L-histidinol + phosphate. Its pathway is amino-acid biosynthesis; L-histidine biosynthesis; L-histidine from 5-phospho-alpha-D-ribose 1-diphosphate: step 6/9. It participates in amino-acid biosynthesis; L-histidine biosynthesis; L-histidine from 5-phospho-alpha-D-ribose 1-diphosphate: step 8/9. The polypeptide is Histidine biosynthesis bifunctional protein HisB (Baumannia cicadellinicola subsp. Homalodisca coagulata).